The sequence spans 361 residues: D-alanine--D-alanine ligase (361 aa).

The ATP-grasp domain maps to 149–353; sequence KKLMAAEGLP…YEELLDVLVQ (205 aa). 176–231 is a binding site for ATP; that stretch reads KKLLGLPVFVKPARGGSSIGISKVSRWEDLPAAVDLARQHDEKVIVESEIVGPEVE. Aspartate 308, glutamate 320, and asparagine 322 together coordinate Mg(2+).

This sequence belongs to the D-alanine--D-alanine ligase family. It depends on Mg(2+) as a cofactor. The cofactor is Mn(2+).

It is found in the cytoplasm. The enzyme catalyses 2 D-alanine + ATP = D-alanyl-D-alanine + ADP + phosphate + H(+). It functions in the pathway cell wall biogenesis; peptidoglycan biosynthesis. Its function is as follows. Cell wall formation. This chain is D-alanine--D-alanine ligase, found in Corynebacterium efficiens (strain DSM 44549 / YS-314 / AJ 12310 / JCM 11189 / NBRC 100395).